Consider the following 428-residue polypeptide: Enolase 2 (428 aa).

Position 162 (glutamine 162) interacts with (2R)-2-phosphoglycerate. Glutamate 204 serves as the catalytic Proton donor. Mg(2+)-binding residues include aspartate 241, glutamate 285, and aspartate 312. 4 residues coordinate (2R)-2-phosphoglycerate: lysine 337, arginine 366, serine 367, and lysine 388. Residue lysine 337 is the Proton acceptor of the active site.

The protein belongs to the enolase family. Requires Mg(2+) as cofactor.

The protein resides in the cytoplasm. It localises to the secreted. It is found in the cell surface. It catalyses the reaction (2R)-2-phosphoglycerate = phosphoenolpyruvate + H2O. Its pathway is carbohydrate degradation; glycolysis; pyruvate from D-glyceraldehyde 3-phosphate: step 4/5. Catalyzes the reversible conversion of 2-phosphoglycerate (2-PG) into phosphoenolpyruvate (PEP). It is essential for the degradation of carbohydrates via glycolysis. The sequence is that of Enolase 2 from Lactobacillus johnsonii (strain CNCM I-12250 / La1 / NCC 533).